A 358-amino-acid chain; its full sequence is Plastoglobulin-1, chloroplastic (358 aa).

A chloroplast-targeting transit peptide spans 1–47; sequence MALLSSTLRAPLVFSKNPKPVSLSSLHSRIYLSPRSPRFPSLRFISA. Positions 48–114 are disordered; that stretch reads AGDTGDAEKP…NDAGNGTPTF (67 aa).

It belongs to the PAP/fibrillin family.

It is found in the plastid. Its subcellular location is the chloroplast. Functionally, may form together with other plastoglobulins a coat on the surface of the lipoprotein particle. The coat may contain receptors for attachment to the thylakoid membrane as well as regulatory proteins that may function in the transfer of lipids to and from the thylakoid membranes. The protein is Plastoglobulin-1, chloroplastic (PG1) of Pisum sativum (Garden pea).